The chain runs to 48 residues: SFAVGSSYGAAPDPLEAQREVCELNPDCDELADHIGFQEAYRRFYGPV.

The 46-residue stretch at 1 to 46 (SFAVGSSYGAAPDPLEAQREVCELNPDCDELADHIGFQEAYRRFYG) folds into the Gla domain. Residues glutamate 16, glutamate 20, glutamate 23, and aspartate 29 each contribute to the Ca(2+) site. 4-carboxyglutamate occurs at positions 16, 20, and 23. Cysteine 22 and cysteine 28 are disulfide-bonded.

It belongs to the osteocalcin/matrix Gla protein family. Post-translationally, gamma-carboxyglutamate residues are formed by vitamin K dependent carboxylation by GGCX. These residues are essential for the binding of calcium.

It is found in the secreted. In terms of biological role, the carboxylated form is one of the main organic components of the bone matrix, which constitutes 1-2% of the total bone protein. The carboxylated form binds strongly to apatite and calcium. This is Osteocalcin (BGLAP) from Dromaius novaehollandiae (Emu).